We begin with the raw amino-acid sequence, 340 residues long: Ketol-acid reductoisomerase (NADP(+)) (340 aa).

One can recognise a KARI N-terminal Rossmann domain in the interval 1-182 (MRVYYDRDCD…GGGRSGIIET (182 aa)). Residues 24–27 (YGSQ), Arg-48, Ser-51, Ser-53, and 83–86 (DELQ) contribute to the NADP(+) site. His-108 is a catalytic residue. Gly-134 lines the NADP(+) pocket. Residues 183 to 329 (NFRQECETDL…EKLRGMMPWI (147 aa)) enclose the KARI C-terminal knotted domain. Residues Asp-191, Glu-195, Glu-227, and Glu-231 each coordinate Mg(2+). Ser-252 serves as a coordination point for substrate.

Belongs to the ketol-acid reductoisomerase family. Mg(2+) serves as cofactor.

The enzyme catalyses (2R)-2,3-dihydroxy-3-methylbutanoate + NADP(+) = (2S)-2-acetolactate + NADPH + H(+). The catalysed reaction is (2R,3R)-2,3-dihydroxy-3-methylpentanoate + NADP(+) = (S)-2-ethyl-2-hydroxy-3-oxobutanoate + NADPH + H(+). It functions in the pathway amino-acid biosynthesis; L-isoleucine biosynthesis; L-isoleucine from 2-oxobutanoate: step 2/4. Its pathway is amino-acid biosynthesis; L-valine biosynthesis; L-valine from pyruvate: step 2/4. Its function is as follows. Involved in the biosynthesis of branched-chain amino acids (BCAA). Catalyzes an alkyl-migration followed by a ketol-acid reduction of (S)-2-acetolactate (S2AL) to yield (R)-2,3-dihydroxy-isovalerate. In the isomerase reaction, S2AL is rearranged via a Mg-dependent methyl migration to produce 3-hydroxy-3-methyl-2-ketobutyrate (HMKB). In the reductase reaction, this 2-ketoacid undergoes a metal-dependent reduction by NADPH to yield (R)-2,3-dihydroxy-isovalerate. In Cereibacter sphaeroides (strain ATCC 17029 / ATH 2.4.9) (Rhodobacter sphaeroides), this protein is Ketol-acid reductoisomerase (NADP(+)).